An 849-amino-acid chain; its full sequence is Autoinducer 1 sensor kinase/phosphatase LuxN (849 aa).

The next 7 helical transmembrane spans lie at 9–29 (IVYA…MWLF), 41–61 (VIFG…IAWI), 160–180 (SYFF…LVAM), 196–216 (IAGI…MTYF), 220–242 (FSLT…YALL), 251–275 (YIAY…AIFI), and 283–301 (WLIA…QLLY). One can recognise a Histidine kinase domain in the interval 468–683 (SIAHEMRNPL…EFHLYFPVVP (216 aa)). His-471 is subject to Phosphohistidine; by autocatalysis. Positions 722–835 (TVLIVDDKEV…ALRHVLGNWL (114 aa)) constitute a Response regulatory domain. At Asp-771 the chain carries 4-aspartylphosphate.

It is found in the cell inner membrane. It catalyses the reaction ATP + protein L-histidine = ADP + protein N-phospho-L-histidine.. The phosphatase activity is constitutive and the kinase activity is regulated by the presence or absence of AI-1. At low cell density the kinase activity overrides the phosphatase activity. Functionally, at low cell density, in the absence of AI-1 (autoinducer 1), LuxN has a kinase activity and autophosphorylates on His-471. The phosphoryl group is then transferred on Asp-771 of the response regulator domain. The phosphoryl group is transferred to LuxU, and ultimately to LuxO. At high cell density, in the presence of AI-1, the kinase activity is inactivated, and the response regulator domain has a phosphatase activity. LuxN phosphatase acts on itself. As LuxU could function to establish an equilibrium between the aspartyl-phosphate of LuxN and the aspartyl-phosphate of LuxO, LuxU transfers phosphate from LuxO to LuxN and finally phosphate is drained from the system. In Vibrio campbellii (strain ATCC BAA-1116), this protein is Autoinducer 1 sensor kinase/phosphatase LuxN (luxN).